The sequence spans 195 residues: Nucleoside triphosphate pyrophosphatase (195 aa).

Catalysis depends on aspartate 70, which acts as the Proton acceptor.

The protein belongs to the Maf family. The cofactor is a divalent metal cation.

The protein localises to the cytoplasm. The enzyme catalyses a ribonucleoside 5'-triphosphate + H2O = a ribonucleoside 5'-phosphate + diphosphate + H(+). It carries out the reaction a 2'-deoxyribonucleoside 5'-triphosphate + H2O = a 2'-deoxyribonucleoside 5'-phosphate + diphosphate + H(+). Nucleoside triphosphate pyrophosphatase. May have a dual role in cell division arrest and in preventing the incorporation of modified nucleotides into cellular nucleic acids. This is Nucleoside triphosphate pyrophosphatase from Cyanothece sp. (strain PCC 7425 / ATCC 29141).